The following is a 229-amino-acid chain: Uracil-DNA glycosylase (229 aa).

Catalysis depends on D70, which acts as the Proton acceptor.

It belongs to the uracil-DNA glycosylase (UDG) superfamily. UNG family.

It is found in the cytoplasm. The enzyme catalyses Hydrolyzes single-stranded DNA or mismatched double-stranded DNA and polynucleotides, releasing free uracil.. In terms of biological role, excises uracil residues from the DNA which can arise as a result of misincorporation of dUMP residues by DNA polymerase or due to deamination of cytosine. In Chlamydia trachomatis serovar L2b (strain UCH-1/proctitis), this protein is Uracil-DNA glycosylase.